The following is a 287-amino-acid chain: MTPRTITVDTVRFGNHLPMTLIAGPCVIEGLEFALRTAEALKQICEGVGVELVYKSSFDKANRTSEGSFRGPGMEAGLRILERVRREVGVPVITDVHEADQCVAVAEVVDMLQTPAFLCRQTDFIQAAARPGKPVNIKKGQFLAPQDMARVAAKAAATGNENILLCERGFSFGYQNLVVDMRGLSIMAQSGYPVIFDATHSVQQPGALGGASGGDRRFVSDLARAAVAVGVAGVFMEVHPDPDHAPCDGPNMLPMAHLSPLLDQLKALDRIRKEAMALESGLSLGDA.

This sequence belongs to the KdsA family.

It is found in the cytoplasm. It carries out the reaction D-arabinose 5-phosphate + phosphoenolpyruvate + H2O = 3-deoxy-alpha-D-manno-2-octulosonate-8-phosphate + phosphate. It functions in the pathway carbohydrate biosynthesis; 3-deoxy-D-manno-octulosonate biosynthesis; 3-deoxy-D-manno-octulosonate from D-ribulose 5-phosphate: step 2/3. It participates in bacterial outer membrane biogenesis; lipopolysaccharide biosynthesis. The protein is 2-dehydro-3-deoxyphosphooctonate aldolase of Magnetococcus marinus (strain ATCC BAA-1437 / JCM 17883 / MC-1).